Consider the following 326-residue polypeptide: Beta-ketoacyl-[acyl-carrier-protein] synthase III (326 aa).

Residues cysteine 120 and histidine 253 contribute to the active site. The tract at residues 254 to 258 (QANIR) is ACP-binding. The active site involves asparagine 283.

It belongs to the thiolase-like superfamily. FabH family. In terms of assembly, homodimer.

The protein localises to the cytoplasm. It carries out the reaction malonyl-[ACP] + acetyl-CoA + H(+) = 3-oxobutanoyl-[ACP] + CO2 + CoA. It participates in lipid metabolism; fatty acid biosynthesis. Its function is as follows. Catalyzes the condensation reaction of fatty acid synthesis by the addition to an acyl acceptor of two carbons from malonyl-ACP. Catalyzes the first condensation reaction which initiates fatty acid synthesis and may therefore play a role in governing the total rate of fatty acid production. Possesses both acetoacetyl-ACP synthase and acetyl transacylase activities. Its substrate specificity determines the biosynthesis of branched-chain and/or straight-chain of fatty acids. The polypeptide is Beta-ketoacyl-[acyl-carrier-protein] synthase III (Ralstonia pickettii (strain 12J)).